The following is a 354-amino-acid chain: GTPase Obg (354 aa).

An Obg domain is found at 1–159; it reads MKFLDQCKIY…LWVWLRLKLI (159 aa). An OBG-type G domain is found at 160 to 328; it reads ADVGLVGLPN…LLRAAFTQVR (169 aa). GTP-binding positions include 166 to 173, 191 to 195, 213 to 216, 280 to 283, and 309 to 311; these read GLPNAGKS, FTTLT, DIPG, NKVD, and SGV. Mg(2+)-binding residues include Ser173 and Thr193. A disordered region spans residues 333 to 354; it reads ETPAEAAIDEAPEEETPGGWQP. Acidic residues predominate over residues 339–348; that stretch reads AIDEAPEEET.

It belongs to the TRAFAC class OBG-HflX-like GTPase superfamily. OBG GTPase family. As to quaternary structure, monomer. The cofactor is Mg(2+).

It localises to the cytoplasm. In terms of biological role, an essential GTPase which binds GTP, GDP and possibly (p)ppGpp with moderate affinity, with high nucleotide exchange rates and a fairly low GTP hydrolysis rate. Plays a role in control of the cell cycle, stress response, ribosome biogenesis and in those bacteria that undergo differentiation, in morphogenesis control. The polypeptide is GTPase Obg (Caulobacter sp. (strain K31)).